Here is a 492-residue protein sequence, read N- to C-terminus: 3-octaprenyl-4-hydroxybenzoate carboxy-lyase (492 aa).

N175 is a binding site for Mn(2+). Residues I178 to R180, R192 to L194, and R197 to G198 each bind prenylated FMN. Residue E241 coordinates Mn(2+). The active-site Proton donor is the D290.

The protein belongs to the UbiD family. As to quaternary structure, homohexamer. Prenylated FMN is required as a cofactor. It depends on Mn(2+) as a cofactor.

The protein resides in the cell membrane. It carries out the reaction a 4-hydroxy-3-(all-trans-polyprenyl)benzoate + H(+) = a 2-(all-trans-polyprenyl)phenol + CO2. It participates in cofactor biosynthesis; ubiquinone biosynthesis. Catalyzes the decarboxylation of 3-octaprenyl-4-hydroxy benzoate to 2-octaprenylphenol, an intermediate step in ubiquinone biosynthesis. This chain is 3-octaprenyl-4-hydroxybenzoate carboxy-lyase, found in Salmonella typhi.